A 522-amino-acid polypeptide reads, in one-letter code: U4/U6 small nuclear ribonucleoprotein Prp4 (522 aa).

Over residues 1–13 (MASSRASSTQATK) the composition is skewed to polar residues. The disordered stretch occupies residues 1–20 (MASSRASSTQATKTKAPDDL). An N6-acetyllysine modification is found at Lys-27. WD repeat units lie at residues 229-268 (GDDRPISYCHFSPNSKMLATACWSGLCKLWSVPDCNLLHT), 271-318 (GHNT…PVAD), 321-360 (GHTVRVARVMWHPSGRFLGTTCYDRSWRLWDLEAQEEILH), 363-402 (GHSMGVYDIAFHQDGSLAGTGGLDAFGRVWDLRTGRCIMF), 405-444 (GHLKEIYGINFSPNGYHIATGSGDNTCKVWDLRQRRCVYT), 447-487 (AHQN…PLKT), and 490-521 (GHEGKVMGLDISSDGQLIATCSYDRTFKLWMA).

Component of the precatalytic spliceosome (spliceosome B complex). Component of the U4/U6-U5 tri-snRNP complex, a building block of the precatalytic spliceosome (spliceosome B complex). The U4/U6-U5 tri-snRNP complex is composed of the U4, U6 and U5 snRNAs and at least PRPF3, PRPF4, PRPF6, PRPF8, PRPF31, SNRNP200, TXNL4A, SNRNP40, SNRPB, SNRPD1, SNRPD2, SNRPD3, SNRPE, SNRPF, SNRPG, DDX23, CD2BP2, PPIH, SNU13, EFTUD2, SART1 and USP39, plus LSM2, LSM3, LSM4, LSM5, LSM6, LSM7 and LSM8. Interacts directly with PRPF18, PPIH and PRPF3. Part of a heteromeric complex containing PPIH, PRPF3 and PRPF4 that is stable in the absence of RNA. Interacts with ERCC6.

The protein localises to the nucleus. Its subcellular location is the nucleus speckle. In terms of biological role, plays a role in pre-mRNA splicing as component of the U4/U6-U5 tri-snRNP complex that is involved in spliceosome assembly, and as component of the precatalytic spliceosome (spliceosome B complex). In Homo sapiens (Human), this protein is U4/U6 small nuclear ribonucleoprotein Prp4 (PRPF4).